The primary structure comprises 448 residues: Adenylosuccinate synthetase (448 aa).

Residues 36–42 and 64–66 contribute to the GTP site; these read GDEGKGK and GHT. Asp37 functions as the Proton acceptor in the catalytic mechanism. The Mg(2+) site is built by Asp37 and Gly64. Residues 37-40, 62-65, Thr154, Arg168, Asn246, Thr261, and Arg325 each bind IMP; these read DEGK and NAGH. The active-site Proton donor is His65. Substrate is bound at residue 321-327; sequence VTTKRKR. GTP-binding positions include Arg327, 353-355, and 436-438; these read KLD and GVG.

This sequence belongs to the adenylosuccinate synthetase family. In terms of assembly, homodimer. Requires Mg(2+) as cofactor.

Its subcellular location is the cytoplasm. The catalysed reaction is IMP + L-aspartate + GTP = N(6)-(1,2-dicarboxyethyl)-AMP + GDP + phosphate + 2 H(+). It functions in the pathway purine metabolism; AMP biosynthesis via de novo pathway; AMP from IMP: step 1/2. Its function is as follows. Plays an important role in the de novo pathway and in the salvage pathway of purine nucleotide biosynthesis. Catalyzes the first committed step in the biosynthesis of AMP from IMP. This is Adenylosuccinate synthetase from Drosophila mojavensis (Fruit fly).